The following is a 427-amino-acid chain: Serine--tRNA ligase (427 aa).

232-234 (TAE) is a binding site for L-serine. 263 to 265 (RSE) is an ATP binding site. Glu286 is an L-serine binding site. ATP is bound at residue 350–353 (EISS). An L-serine-binding site is contributed by Ser385.

Belongs to the class-II aminoacyl-tRNA synthetase family. Type-1 seryl-tRNA synthetase subfamily. As to quaternary structure, homodimer. The tRNA molecule binds across the dimer.

It localises to the cytoplasm. It carries out the reaction tRNA(Ser) + L-serine + ATP = L-seryl-tRNA(Ser) + AMP + diphosphate + H(+). The enzyme catalyses tRNA(Sec) + L-serine + ATP = L-seryl-tRNA(Sec) + AMP + diphosphate + H(+). Its pathway is aminoacyl-tRNA biosynthesis; selenocysteinyl-tRNA(Sec) biosynthesis; L-seryl-tRNA(Sec) from L-serine and tRNA(Sec): step 1/1. Catalyzes the attachment of serine to tRNA(Ser). Is also able to aminoacylate tRNA(Sec) with serine, to form the misacylated tRNA L-seryl-tRNA(Sec), which will be further converted into selenocysteinyl-tRNA(Sec). In Lacticaseibacillus casei (strain BL23) (Lactobacillus casei), this protein is Serine--tRNA ligase.